The primary structure comprises 176 residues: Sec-independent protein translocase protein TatB (176 aa).

The chain crosses the membrane as a helical span at residues 1 to 21; the sequence is MLDLGLSKMALIGVVALVVLG. The segment at 155–176 is disordered; the sequence is QSGAARVARHQPASLRRPTRFL.

It belongs to the TatB family. In terms of assembly, the Tat system comprises two distinct complexes: a TatABC complex, containing multiple copies of TatA, TatB and TatC subunits, and a separate TatA complex, containing only TatA subunits. Substrates initially bind to the TatABC complex, which probably triggers association of the separate TatA complex to form the active translocon.

The protein localises to the cell inner membrane. Its function is as follows. Part of the twin-arginine translocation (Tat) system that transports large folded proteins containing a characteristic twin-arginine motif in their signal peptide across membranes. Together with TatC, TatB is part of a receptor directly interacting with Tat signal peptides. TatB may form an oligomeric binding site that transiently accommodates folded Tat precursor proteins before their translocation. The chain is Sec-independent protein translocase protein TatB from Burkholderia ambifaria (strain ATCC BAA-244 / DSM 16087 / CCUG 44356 / LMG 19182 / AMMD) (Burkholderia cepacia (strain AMMD)).